Here is a 421-residue protein sequence, read N- to C-terminus: MSKTHLTEQKFSDFALHPQVVEALEKKGFYNCTPIQALALPLTLAGRDVAGQAQTGTGKTMAFLTSTFHYLLSHPAIDDRKVNQPRALIMAPTRELAVQIHADAEPLAQVTGLKLGLAYGGDGYDKQLKVLESGVDILIGTTGRLIDYAKQNHINLGAIQVVVLDEADRMYDLGFIKDIRWLFRRMPPAAQRLNMLFSATLSYRVRELAFEQMNNAEYVEVEPEQKTGHRIKEELFYPSNEEKMRLLQTLIEEEWPDRAIIFANTKHRCEDIWGHLAADGHRVGLLTGDVAQKKRLRILDEFTRGDLDILVATDVAARGLHIPAVTHVFNYDLPDDCEDYVHRIGRTGRAGASGHSISLACEEYALNLPAIESYIGHSIPVSKYNPEALMTDLPKPLRLTRSRPGNGPRRAGAPRNRRRSG.

The Q motif motif lies at 9–37 (QKFSDFALHPQVVEALEKKGFYNCTPIQA). The Helicase ATP-binding domain maps to 40–219 (LPLTLAGRDV…FEQMNNAEYV (180 aa)). Residue 53 to 60 (AQTGTGKT) coordinates ATP. Residues 165 to 168 (DEAD) carry the DEAD box motif. The region spanning 245–390 (RLLQTLIEEE…VSKYNPEALM (146 aa)) is the Helicase C-terminal domain. A disordered region spans residues 396–421 (PLRLTRSRPGNGPRRAGAPRNRRRSG). Low complexity predominate over residues 402–414 (SRPGNGPRRAGAP).

It belongs to the DEAD box helicase family. RhlB subfamily. Component of the RNA degradosome, which is a multiprotein complex involved in RNA processing and mRNA degradation.

The protein localises to the cytoplasm. The catalysed reaction is ATP + H2O = ADP + phosphate + H(+). DEAD-box RNA helicase involved in RNA degradation. Has RNA-dependent ATPase activity and unwinds double-stranded RNA. The protein is ATP-dependent RNA helicase RhlB of Salmonella arizonae (strain ATCC BAA-731 / CDC346-86 / RSK2980).